The sequence spans 64 residues: DNA gyrase inhibitor YacG (64 aa).

Zn(2+) contacts are provided by Cys9, Cys12, Cys28, and Cys32. Positions 42–64 are disordered; it reads DEENAIPGAPDMSDSDGWSEEQY. Acidic residues predominate over residues 54-64; sequence SDSDGWSEEQY.

It belongs to the DNA gyrase inhibitor YacG family. As to quaternary structure, interacts with GyrB. The cofactor is Zn(2+).

Inhibits all the catalytic activities of DNA gyrase by preventing its interaction with DNA. Acts by binding directly to the C-terminal domain of GyrB, which probably disrupts DNA binding by the gyrase. The protein is DNA gyrase inhibitor YacG of Vibrio vulnificus (strain CMCP6).